The sequence spans 151 residues: Large ribosomal subunit protein bL9 (151 aa).

It belongs to the bacterial ribosomal protein bL9 family.

In terms of biological role, binds to the 23S rRNA. This chain is Large ribosomal subunit protein bL9, found in Prochlorococcus marinus (strain MIT 9301).